The chain runs to 94 residues: Large ribosomal subunit protein uL23 (94 aa).

This sequence belongs to the universal ribosomal protein uL23 family. As to quaternary structure, part of the 50S ribosomal subunit. Contacts protein L29, and trigger factor when it is bound to the ribosome.

In terms of biological role, one of the early assembly proteins it binds 23S rRNA. One of the proteins that surrounds the polypeptide exit tunnel on the outside of the ribosome. Forms the main docking site for trigger factor binding to the ribosome. This chain is Large ribosomal subunit protein uL23, found in Roseiflexus sp. (strain RS-1).